A 147-amino-acid chain; its full sequence is Cell division protein SepF 1 (147 aa).

Belongs to the SepF family. Homodimer. Interacts with FtsZ.

It localises to the cytoplasm. Functionally, cell division protein that is part of the divisome complex and is recruited early to the Z-ring. Probably stimulates Z-ring formation, perhaps through the cross-linking of FtsZ protofilaments. Its function overlaps with FtsA. This Desulforamulus reducens (strain ATCC BAA-1160 / DSM 100696 / MI-1) (Desulfotomaculum reducens) protein is Cell division protein SepF 1.